We begin with the raw amino-acid sequence, 130 residues long: Ribosome-binding factor A (130 aa).

Belongs to the RbfA family. As to quaternary structure, monomer. Binds 30S ribosomal subunits, but not 50S ribosomal subunits or 70S ribosomes.

Its subcellular location is the cytoplasm. In terms of biological role, one of several proteins that assist in the late maturation steps of the functional core of the 30S ribosomal subunit. Associates with free 30S ribosomal subunits (but not with 30S subunits that are part of 70S ribosomes or polysomes). Required for efficient processing of 16S rRNA. May interact with the 5'-terminal helix region of 16S rRNA. The sequence is that of Ribosome-binding factor A from Pseudomonas aeruginosa (strain LESB58).